The sequence spans 560 residues: Putative transport protein VSAL_I2029 (560 aa).

Helical transmembrane passes span 14 to 34 (ILLL…KIGS), 37 to 57 (LGSS…GYTF), 66 to 86 (FMLF…GIFL), 94 to 114 (LLVL…GYYF), and 161 to 181 (NLSV…ILLA). 2 consecutive RCK C-terminal domains span residues 203-292 (RGIG…FRNG) and 293-376 (KEVF…KIGF). 5 consecutive transmembrane segments (helical) span residues 386–406 (LLAF…TMSF), 409–429 (VTFG…LGFL), 451–471 (GLLV…IEYF), 478–498 (VLAA…LVGA), and 539–559 (AGTY…MILL).

It belongs to the AAE transporter (TC 2.A.81) family. YbjL subfamily.

Its subcellular location is the cell membrane. In Aliivibrio salmonicida (strain LFI1238) (Vibrio salmonicida (strain LFI1238)), this protein is Putative transport protein VSAL_I2029.